Here is a 250-residue protein sequence, read N- to C-terminus: Probable replication-associated protein repA2 (250 aa).

It belongs to the IncFII RepA family.

Its function is as follows. This protein is essential for plasmid replication; it is involved in copy control functions. The chain is Probable replication-associated protein repA2 (repA2) from Buchnera aphidicola subsp. Acyrthosiphon pisum (strain APS) (Acyrthosiphon pisum symbiotic bacterium).